A 570-amino-acid chain; its full sequence is Sulfite reductase [NADPH] hemoprotein beta-component (570 aa).

[4Fe-4S] cluster contacts are provided by Cys-434, Cys-440, Cys-479, and Cys-483. Position 483 (Cys-483) interacts with siroheme.

Belongs to the nitrite and sulfite reductase 4Fe-4S domain family. In terms of assembly, alpha(8)-beta(8). The alpha component is a flavoprotein, the beta component is a hemoprotein. Requires siroheme as cofactor. [4Fe-4S] cluster is required as a cofactor.

It catalyses the reaction hydrogen sulfide + 3 NADP(+) + 3 H2O = sulfite + 3 NADPH + 4 H(+). Its pathway is sulfur metabolism; hydrogen sulfide biosynthesis; hydrogen sulfide from sulfite (NADPH route): step 1/1. Component of the sulfite reductase complex that catalyzes the 6-electron reduction of sulfite to sulfide. This is one of several activities required for the biosynthesis of L-cysteine from sulfate. The protein is Sulfite reductase [NADPH] hemoprotein beta-component of Shigella flexneri serotype 5b (strain 8401).